A 127-amino-acid chain; its full sequence is Aspartate 1-decarboxylase (127 aa).

S25 functions as the Schiff-base intermediate with substrate; via pyruvic acid in the catalytic mechanism. S25 bears the Pyruvic acid (Ser) mark. T57 provides a ligand contact to substrate. Catalysis depends on Y58, which acts as the Proton donor. G73–A75 is a substrate binding site.

Belongs to the PanD family. In terms of assembly, heterooctamer of four alpha and four beta subunits. The cofactor is pyruvate. Post-translationally, is synthesized initially as an inactive proenzyme, which is activated by self-cleavage at a specific serine bond to produce a beta-subunit with a hydroxyl group at its C-terminus and an alpha-subunit with a pyruvoyl group at its N-terminus.

The protein resides in the cytoplasm. It carries out the reaction L-aspartate + H(+) = beta-alanine + CO2. The protein operates within cofactor biosynthesis; (R)-pantothenate biosynthesis; beta-alanine from L-aspartate: step 1/1. Catalyzes the pyruvoyl-dependent decarboxylation of aspartate to produce beta-alanine. The protein is Aspartate 1-decarboxylase of Staphylococcus carnosus (strain TM300).